The chain runs to 381 residues: UDP-4-amino-4-deoxy-L-arabinose--oxoglutarate aminotransferase (381 aa).

Residue Lys182 is modified to N6-(pyridoxal phosphate)lysine.

Belongs to the DegT/DnrJ/EryC1 family. ArnB subfamily. In terms of assembly, homodimer. Pyridoxal 5'-phosphate serves as cofactor.

It carries out the reaction UDP-4-amino-4-deoxy-beta-L-arabinose + 2-oxoglutarate = UDP-beta-L-threo-pentopyranos-4-ulose + L-glutamate. Its pathway is nucleotide-sugar biosynthesis; UDP-4-deoxy-4-formamido-beta-L-arabinose biosynthesis; UDP-4-deoxy-4-formamido-beta-L-arabinose from UDP-alpha-D-glucuronate: step 2/3. It functions in the pathway bacterial outer membrane biogenesis; lipopolysaccharide biosynthesis. In terms of biological role, catalyzes the conversion of UDP-4-keto-arabinose (UDP-Ara4O) to UDP-4-amino-4-deoxy-L-arabinose (UDP-L-Ara4N). The modified arabinose is attached to lipid A and is required for resistance to polymyxin and cationic antimicrobial peptides. The protein is UDP-4-amino-4-deoxy-L-arabinose--oxoglutarate aminotransferase of Photorhabdus laumondii subsp. laumondii (strain DSM 15139 / CIP 105565 / TT01) (Photorhabdus luminescens subsp. laumondii).